A 73-amino-acid polypeptide reads, in one-letter code: Guanine nucleotide-binding protein G(I)/G(S)/G(O) subunit gamma-11 (73 aa).

The disordered stretch occupies residues 51 to 73; the sequence is DPLVKGIPEDKNPFKEKGSCVIS. At C70 the chain carries Cysteine methyl ester. A lipid anchor (S-farnesyl cysteine) is attached at C70. Positions 71-73 are cleaved as a propeptide — removed in mature form; the sequence is VIS.

Belongs to the G protein gamma family. As to quaternary structure, g proteins are composed of 3 units, alpha, beta and gamma. Interacts with beta-1 and beta-3, but not with beta-2. As to expression, abundantly expressed in all tissues tested except for brain.

The protein resides in the cell membrane. Its function is as follows. Guanine nucleotide-binding proteins (G proteins) are involved as a modulator or transducer in various transmembrane signaling systems. The beta and gamma chains are required for the GTPase activity, for replacement of GDP by GTP, and for G protein-effector interaction. This is Guanine nucleotide-binding protein G(I)/G(S)/G(O) subunit gamma-11 (GNG11) from Homo sapiens (Human).